We begin with the raw amino-acid sequence, 984 residues long: Ephrin type-B receptor 1 (984 aa).

An N-terminal signal peptide occupies residues 1-17 (MALDCLLLFLLASAVAA). The Extracellular segment spans residues 18-540 (MEETLMDTRT…YKSELREQLP (523 aa)). The Eph LBD domain occupies 19-201 (EETLMDTRTA…FFKKCPSIVQ (183 aa)). 2 consecutive Fibronectin type-III domains span residues 322–432 (VPSG…TNQA) and 433–528 (APST…TLTD). 3 N-linked (GlcNAc...) asparagine glycosylation sites follow: asparagine 334, asparagine 426, and asparagine 480. A helical transmembrane segment spans residues 541–563 (LIAGSAAAGVVFVVSLVAISIVC). Residues 564 to 984 (SRKRAYSKEA…QMNQSPSVMA (421 aa)) lie on the Cytoplasmic side of the membrane. At tyrosine 600 the chain carries Phosphotyrosine. A Protein kinase domain is found at 619–882 (VKIEEVIGAG…EIVNTLDKMI (264 aa)). ATP is bound by residues 625-633 (IGAGEFGEV) and lysine 651. Aspartate 744 acts as the Proton acceptor in catalysis. In terms of domain architecture, SAM spans 911-975 (TAFTTVDDWL…LSSIHSMRVQ (65 aa)). Tyrosine 928 carries the phosphotyrosine; by autocatalysis modification. Positions 982–984 (VMA) match the PDZ-binding motif.

This sequence belongs to the protein kinase superfamily. Tyr protein kinase family. Ephrin receptor subfamily. In terms of assembly, heterotetramer upon binding of the ligand. The heterotetramer is composed of an ephrin dimer and a receptor dimer. Oligomerization is probably required to induce biological responses. Interacts with EPHB6; transphosphorylates EPHB6 to form an active signaling complex. Interacts with PICK1. Interacts (through Tyr-594) with NCK1 (via SH2 domain); activates the JUN cascade to regulate cell adhesion. The ligand-activated form interacts (through Tyr-928) with GRB7 and GRB10 (via SH2 domains). The ligand-activated form interacts (residues within the catalytic domain) with GRB2 (via SH2 domain). Interacts with GRB2, SHC1 and SRC; activates the MAPK/ERK cascade to regulate cell migration. Interacts with CBL; regulates receptor degradation through ubiquitination. Interacts with ACP1. In terms of processing, phosphorylated. Autophosphorylation is stimulated by the ligand EFNB1. Required for interaction with SH2 domain-containing interactors, for activation of the MAPK/ERK and JUN signaling cascades and for ubiquitination by CBL. Post-translationally, ubiquitinated; (EFNB1)ligand-induced poly- and/or multi-ubiquitination by CBL is regulated by SRC and leads to lysosomal degradation. Restricted to brain and testes.

Its subcellular location is the cell membrane. It localises to the early endosome membrane. The protein localises to the cell projection. It is found in the dendrite. The enzyme catalyses L-tyrosyl-[protein] + ATP = O-phospho-L-tyrosyl-[protein] + ADP + H(+). Functionally, receptor tyrosine kinase which binds promiscuously transmembrane ephrin-B family ligands residing on adjacent cells, leading to contact-dependent bidirectional signaling into neighboring cells. The signaling pathway downstream of the receptor is referred to as forward signaling while the signaling pathway downstream of the ephrin ligand is referred to as reverse signaling. Cognate/functional ephrin ligands for this receptor include EFNB1, EFNB2 and EFNB3. During nervous system development, regulates retinal axon guidance redirecting ipsilaterally ventrotemporal retinal ganglion cells axons at the optic chiasm midline. This probably requires repulsive interaction with EFNB2. In the adult nervous system together with EFNB3, regulates chemotaxis, proliferation and polarity of the hippocampus neural progenitors. In addition to its role in axon guidance also plays an important redundant role with other ephrin-B receptors in development and maturation of dendritic spines and synapse formation. May also regulate angiogenesis. More generally, may play a role in targeted cell migration and adhesion. Upon activation by EFNB1 and probably other ephrin-B ligands activates the MAPK/ERK and the JNK signaling cascades to regulate cell migration and adhesion respectively. Involved in the maintenance of the pool of satellite cells (muscle stem cells) by promoting their self-renewal and reducing their activation and differentiation. The protein is Ephrin type-B receptor 1 (Ephb1) of Rattus norvegicus (Rat).